A 303-amino-acid chain; its full sequence is tRNA pseudouridine synthase B (303 aa).

Asp-47 acts as the Nucleophile in catalysis.

This sequence belongs to the pseudouridine synthase TruB family. Type 1 subfamily.

The enzyme catalyses uridine(55) in tRNA = pseudouridine(55) in tRNA. Responsible for synthesis of pseudouridine from uracil-55 in the psi GC loop of transfer RNAs. The polypeptide is tRNA pseudouridine synthase B (Roseobacter denitrificans (strain ATCC 33942 / OCh 114) (Erythrobacter sp. (strain OCh 114))).